We begin with the raw amino-acid sequence, 145 residues long: Large ribosomal subunit protein uL14m (145 aa).

The transit peptide at 1–30 (MAVLTGLFGFFAYVRGAVSQRCFSTSGSLS) directs the protein to the mitochondrion.

It belongs to the universal ribosomal protein uL14 family. In terms of assembly, component of the mitochondrial ribosome large subunit (39S) which comprises a 16S rRNA and about 50 distinct proteins. Interacts with MALSU1.

The protein localises to the mitochondrion. Functionally, may form part of 2 intersubunit bridges in the assembled ribosome. Upon binding to MALSU1, intersubunit bridge formation is blocked, preventing ribosome formation and repressing translation. The protein is Large ribosomal subunit protein uL14m (Mrpl14) of Rattus norvegicus (Rat).